The chain runs to 717 residues: Ribosomal RNA large subunit methyltransferase K/L (717 aa).

The THUMP domain maps to 44-155 (DAYKVCIYSY…KQFVNVFLCL (112 aa)).

This sequence belongs to the methyltransferase superfamily. RlmKL family.

The protein resides in the cytoplasm. It catalyses the reaction guanosine(2445) in 23S rRNA + S-adenosyl-L-methionine = N(2)-methylguanosine(2445) in 23S rRNA + S-adenosyl-L-homocysteine + H(+). The enzyme catalyses guanosine(2069) in 23S rRNA + S-adenosyl-L-methionine = N(2)-methylguanosine(2069) in 23S rRNA + S-adenosyl-L-homocysteine + H(+). In terms of biological role, specifically methylates the guanine in position 2445 (m2G2445) and the guanine in position 2069 (m7G2069) of 23S rRNA. The chain is Ribosomal RNA large subunit methyltransferase K/L from Francisella tularensis subsp. tularensis (strain SCHU S4 / Schu 4).